The following is a 266-amino-acid chain: Glucosamine-6-phosphate deaminase (266 aa).

D72 functions as the Proton acceptor; for enolization step in the catalytic mechanism. D141 serves as the catalytic For ring-opening step. Catalysis depends on H143, which acts as the Proton acceptor; for ring-opening step. The active-site For ring-opening step is E148.

This sequence belongs to the glucosamine/galactosamine-6-phosphate isomerase family. NagB subfamily. In terms of assembly, homohexamer.

The enzyme catalyses alpha-D-glucosamine 6-phosphate + H2O = beta-D-fructose 6-phosphate + NH4(+). It functions in the pathway amino-sugar metabolism; N-acetylneuraminate degradation; D-fructose 6-phosphate from N-acetylneuraminate: step 5/5. Allosterically activated by N-acetylglucosamine 6-phosphate (GlcNAc6P). Its function is as follows. Catalyzes the reversible isomerization-deamination of glucosamine 6-phosphate (GlcN6P) to form fructose 6-phosphate (Fru6P) and ammonium ion. In Salmonella arizonae (strain ATCC BAA-731 / CDC346-86 / RSK2980), this protein is Glucosamine-6-phosphate deaminase.